A 122-amino-acid polypeptide reads, in one-letter code: UPF0102 protein CA_C1763 (122 aa).

It belongs to the UPF0102 family.

This chain is UPF0102 protein CA_C1763, found in Clostridium acetobutylicum (strain ATCC 824 / DSM 792 / JCM 1419 / IAM 19013 / LMG 5710 / NBRC 13948 / NRRL B-527 / VKM B-1787 / 2291 / W).